The primary structure comprises 343 residues: T-cell immunoglobulin and mucin domain-containing protein 4 (343 aa).

The first 22 residues, 1–22 (MSKGLLLLWLVTELWWLYLTPA), serve as a signal peptide directing secretion. Residues 23 to 128 (ASEDTIIGFL…WFNDVKKNVR (106 aa)) form the Ig-like V-type domain. The Extracellular portion of the chain corresponds to 23 to 279 (ASEDTIIGFL…KSHQINSRQT (257 aa)). Intrachain disulfides connect Cys-40/Cys-112, Cys-53/Cys-64, and Cys-59/Cys-111. N-linked (GlcNAc...) asparagine glycosylation is present at Asn-220. A disordered region spans residues 239 to 258 (TGSNPGILPSTSQLTTQKTT). The span at 248–258 (STSQLTTQKTT) shows a compositional bias: low complexity. The helical transmembrane segment at 280–300 (ILIIACCVGFVLMVLLFLAFL) threads the bilayer. Topologically, residues 301 to 343 (LRGKVTGANCLQRHKRPDNTEDSDSVLNDMSHGRDDEDGIFTL) are cytoplasmic. Residues 313-343 (RHKRPDNTEDSDSVLNDMSHGRDDEDGIFTL) form a disordered region. 3 positions are modified to phosphoserine: Ser-323, Ser-325, and Ser-331.

The protein belongs to the immunoglobulin superfamily. TIM family. As to quaternary structure, homodimer. As to expression, predominantly expressed in lymphoid tissues, such as spleen, lymph nodes, and Peyer patches. Also expressed in fetal liver, salivary gland, and spleen stromal cells, predominantly in the marginal zone and to a lesser extent throughout the white pulp. Not expressed in bone marrow-derived cells. Expressed mainly by antigen presenting cells (APCs) in T- and B-cell areas, but not by T- or B-lymphocytes.

The protein localises to the membrane. In terms of biological role, phosphatidylserine receptor that plays different role in immune response including phagocytosis of apoptotic cells and T-cell regulation. Controls T-cell activation in a bimodal fashion, decreasing the activation of naive T-cells by inducing cell cycle arrest, while increasing proliferation of activated T-cells by activating AKT1 and ERK1/2 phosphorylations and subsequent signaling pathways. Also plays a role in efferocytosis which is the process by which apoptotic cells are removed by phagocytic cells. Mechanistically, promotes the engulfment of apoptotic cells or exogenous particles by securing them to phagocytes through direct binding to phosphatidylserine present on apoptotic cells, while other engulfment receptors such as MERTK efficiently recognize apoptotic cells and mediate their ingestion. Additionally, promotes autophagy process by suppressing NLRP3 inflammasome activity via activation of STK11/PRKAA1 pathway in a phosphatidylserine-dependent mechanism. The chain is T-cell immunoglobulin and mucin domain-containing protein 4 (Timd4) from Mus musculus (Mouse).